The chain runs to 548 residues: Probable thiamine biosynthetic bifunctional enzyme, chloroplastic (548 aa).

Over residues 1 to 10 the composition is skewed to polar residues; it reads MAAAPQQSVH. Residues 1-40 form a disordered region; the sequence is MAAAPQQSVHPSLPSSTSTLRLLISSSPRRPPPPPPRARR. Residues 1–47 constitute a chloroplast transit peptide; that stretch reads MAAAPQQSVHPSLPSSTSTLRLLISSSPRRPPPPPPRARRYNRLAAS. Residues 11-28 are compositionally biased toward low complexity; it reads PSLPSSTSTLRLLISSSP. 4-amino-2-methyl-5-(diphosphooxymethyl)pyrimidine is bound by residues 372-376 and Asn-404; that span reads QLREK. Mg(2+) is bound by residues Asp-405 and Asp-424. Residue Ser-443 coordinates 4-amino-2-methyl-5-(diphosphooxymethyl)pyrimidine. Position 469–471 (469–471) interacts with 2-[(2R,5Z)-2-carboxy-4-methylthiazol-5(2H)-ylidene]ethyl phosphate; it reads TST. Residue Lys-472 coordinates 4-amino-2-methyl-5-(diphosphooxymethyl)pyrimidine. 2-[(2R,5Z)-2-carboxy-4-methylthiazol-5(2H)-ylidene]ethyl phosphate contacts are provided by residues Gly-499 and 522–523; that span reads VS.

This sequence belongs to the thiamine-phosphate synthase family. Requires Mg(2+) as cofactor.

The protein resides in the plastid. Its subcellular location is the chloroplast. The enzyme catalyses 2-[(2R,5Z)-2-carboxy-4-methylthiazol-5(2H)-ylidene]ethyl phosphate + 4-amino-2-methyl-5-(diphosphooxymethyl)pyrimidine + 2 H(+) = thiamine phosphate + CO2 + diphosphate. The catalysed reaction is 2-(2-carboxy-4-methylthiazol-5-yl)ethyl phosphate + 4-amino-2-methyl-5-(diphosphooxymethyl)pyrimidine + 2 H(+) = thiamine phosphate + CO2 + diphosphate. It carries out the reaction 4-methyl-5-(2-phosphooxyethyl)-thiazole + 4-amino-2-methyl-5-(diphosphooxymethyl)pyrimidine + H(+) = thiamine phosphate + diphosphate. It catalyses the reaction 4-amino-5-hydroxymethyl-2-methylpyrimidine + ATP = 4-amino-2-methyl-5-(phosphooxymethyl)pyrimidine + ADP + H(+). The protein operates within cofactor biosynthesis; thiamine diphosphate biosynthesis; thiamine phosphate from 4-amino-2-methyl-5-diphosphomethylpyrimidine and 4-methyl-5-(2-phosphoethyl)-thiazole: step 1/1. Its pathway is cofactor biosynthesis; thiamine diphosphate biosynthesis; 4-amino-2-methyl-5-diphosphomethylpyrimidine from 5-amino-1-(5-phospho-D-ribosyl)imidazole: step 2/3. Functionally, essential for thiamine biosynthesis. Bifunctional enzyme that catalyzes the phosphorylation of hydroxymethylpyrimidine phosphate (HMP-P) to HMP-PP and condenses 4-methyl-5-(beta-hydroxyethyl)thiazole monophosphate (THZ-P) and 2-methyl-4-amino-5-hydroxymethyl pyrimidine pyrophosphate (HMP-PP) to form thiamine monophosphate (TMP). This chain is Probable thiamine biosynthetic bifunctional enzyme, chloroplastic, found in Oryza sativa subsp. japonica (Rice).